Here is a 624-residue protein sequence, read N- to C-terminus: Low affinity potassium transport system protein Kup (624 aa).

Helical transmembrane passes span 9-29, 49-69, 103-123, 137-157, 165-185, 213-233, 247-267, 276-296, 337-357, 365-385, 398-418, and 421-441; these read LPAI…TSPL, VFGF…IKYL, VIMG…TPAI, PQLD…LFMI, VGKL…GLGL, VSFI…ALYA, WFTV…ALLL, PFFL…AALA, IYIP…IVIV, LAAA…ILST, FVAL…TANL, and LLSG…VMTT.

The protein belongs to the HAK/KUP transporter (TC 2.A.72) family.

Its subcellular location is the cell inner membrane. The catalysed reaction is K(+)(in) + H(+)(in) = K(+)(out) + H(+)(out). Its function is as follows. Responsible for the low-affinity transport of potassium into the cell. Likely operates as a K(+):H(+) symporter. This chain is Low affinity potassium transport system protein Kup, found in Shigella dysenteriae serotype 1 (strain Sd197).